Here is a 1349-residue protein sequence, read N- to C-terminus: ABC multidrug transporter mdr1 (1349 aa).

The tract at residues Met-1 to Lys-62 is disordered. A compositionally biased stretch (basic and acidic residues) spans Asp-35 to Leu-45. Helical transmembrane passes span Ile-108–Phe-128, Tyr-162–Ile-182, Lys-234–Val-254, and Trp-257–Gly-277. In terms of domain architecture, ABC transmembrane type-1 1 spans Leu-112 to Asn-402. An N-linked (GlcNAc...) asparagine glycan is attached at Asn-308. Helical transmembrane passes span Ile-339–Phe-359 and Val-371–Gly-391. The region spanning Ile-437–Ala-682 is the ABC transporter 1 domain. Gly-472–Ser-479 is an ATP binding site. 2 helical membrane-spanning segments follow: residues Met-779–Leu-799 and Phe-828–Ile-848. One can recognise an ABC transmembrane type-1 2 domain in the interval Leu-780–Lys-1069. Residues Asn-878 and Asn-893 are each glycosylated (N-linked (GlcNAc...) asparagine). 4 consecutive transmembrane segments (helical) span residues Gly-896 to Met-916, Leu-926 to Leu-948, Ala-1016 to His-1036, and Phe-1043 to Phe-1063. Residues Ile-1104–Leu-1342 form the ABC transporter 2 domain. Residue Asn-1126 is glycosylated (N-linked (GlcNAc...) asparagine). Position 1139 to 1146 (Gly-1139 to Ser-1146) interacts with ATP.

Belongs to the ABC transporter superfamily. ABCB family. Multidrug resistance exporter (TC 3.A.1.201) subfamily.

It localises to the cell membrane. It catalyses the reaction voriconazole(in) + ATP + H2O = voriconazole(out) + ADP + phosphate + H(+). Its function is as follows. Pleiotropic ABC efflux transporter that may be involved in A.fumigatus adaptation to azoles such as vorizonazole. The protein is ABC multidrug transporter mdr1 of Aspergillus fumigatus (strain ATCC MYA-4609 / CBS 101355 / FGSC A1100 / Af293) (Neosartorya fumigata).